The chain runs to 361 residues: D-malate dehydrogenase [decarboxylating] (361 aa).

Mn(2+) is bound by residues Asp-224, Asp-248, and Asp-252.

This sequence belongs to the isocitrate and isopropylmalate dehydrogenases family. The cofactor is Mg(2+). Requires Mn(2+) as cofactor.

The protein localises to the cytoplasm. The enzyme catalyses (R)-malate + NAD(+) = pyruvate + CO2 + NADH. Its function is as follows. Catalyzes the NAD(+)-dependent oxidative decarboxylation of D-malate into pyruvate. Is essential for aerobic growth on D-malate as the sole carbon source. But is not required for anaerobic D-malate utilization, although DmlA is expressed and active in those conditions. Appears to be not able to use L-tartrate as a substrate for dehydrogenation instead of D-malate. The sequence is that of D-malate dehydrogenase [decarboxylating] (dmlA) from Escherichia coli (strain K12).